Consider the following 393-residue polypeptide: Phospho-N-acetylmuramoyl-pentapeptide-transferase (393 aa).

Helical transmembrane passes span Arg-29–Ile-49, Thr-75–Phe-95, Phe-101–Trp-121, Tyr-138–Glu-158, Ser-193–Gly-213, Gly-226–Thr-246, Ala-263–Phe-283, Val-290–Ile-310, Val-315–Val-335, and Gln-370–Leu-390.

It belongs to the glycosyltransferase 4 family. MraY subfamily. The cofactor is Mg(2+).

Its subcellular location is the cell inner membrane. It carries out the reaction UDP-N-acetyl-alpha-D-muramoyl-L-alanyl-gamma-D-glutamyl-meso-2,6-diaminopimeloyl-D-alanyl-D-alanine + di-trans,octa-cis-undecaprenyl phosphate = di-trans,octa-cis-undecaprenyl diphospho-N-acetyl-alpha-D-muramoyl-L-alanyl-D-glutamyl-meso-2,6-diaminopimeloyl-D-alanyl-D-alanine + UMP. It participates in cell wall biogenesis; peptidoglycan biosynthesis. Functionally, catalyzes the initial step of the lipid cycle reactions in the biosynthesis of the cell wall peptidoglycan: transfers peptidoglycan precursor phospho-MurNAc-pentapeptide from UDP-MurNAc-pentapeptide onto the lipid carrier undecaprenyl phosphate, yielding undecaprenyl-pyrophosphoryl-MurNAc-pentapeptide, known as lipid I. In Methylibium petroleiphilum (strain ATCC BAA-1232 / LMG 22953 / PM1), this protein is Phospho-N-acetylmuramoyl-pentapeptide-transferase.